The chain runs to 193 residues: Large ribosomal subunit protein uL18 (193 aa).

It belongs to the universal ribosomal protein uL18 family. Part of the 50S ribosomal subunit. Contacts the 5S and 23S rRNAs.

Functionally, this is one of the proteins that bind and probably mediate the attachment of the 5S RNA into the large ribosomal subunit, where it forms part of the central protuberance. The protein is Large ribosomal subunit protein uL18 of Methanosphaera stadtmanae (strain ATCC 43021 / DSM 3091 / JCM 11832 / MCB-3).